A 410-amino-acid chain; its full sequence is Alanine racemase (410 aa).

Positions 28–76 (VDFLHNVANKEEFAGNTSPRTAAYTLVREDASLGSTPKLPLGASYAKNL) constitute an RPE1 insert domain. Lysine 83 serves as the catalytic Proton acceptor; specific for D-alanine. Lysine 83 carries the post-translational modification N6-(pyridoxal phosphate)lysine. Arginine 182 is a substrate binding site. Tyrosine 305 (proton acceptor; specific for L-alanine) is an active-site residue. Methionine 353 provides a ligand contact to substrate.

The protein belongs to the alanine racemase family. Pyridoxal 5'-phosphate is required as a cofactor.

It catalyses the reaction L-alanine = D-alanine. The protein operates within amino-acid biosynthesis; D-alanine biosynthesis; D-alanine from L-alanine: step 1/1. Functionally, catalyzes the interconversion of L-alanine and D-alanine. May also act on other amino acids. The polypeptide is Alanine racemase (alr) (Rickettsia bellii (strain RML369-C)).